The chain runs to 836 residues: Granulocyte colony-stimulating factor receptor (836 aa).

The first 24 residues, 1 to 24 (MARLGNCSLTWAALIILLLPGSLE), serve as a signal peptide directing secretion. The Ig-like C2-type domain occupies 25 to 117 (ECGHISVSAP…SLQILDQVEL (93 aa)). Residues 25 to 627 (ECGHISVSAP…TLTPEGSELH (603 aa)) lie on the Extracellular side of the membrane. 2 disulfides stabilise this stretch: Cys26–Cys52 and Cys46–Cys101. 4 N-linked (GlcNAc...) asparagine glycosylation sites follow: Asn51, Asn93, Asn128, and Asn134. Fibronectin type-III domains follow at residues 125 to 230 (IPHN…LEPP), 233 to 332 (RTMD…TTER), 334 to 430 (PTVR…SRGP), 431 to 528 (ALTR…MAPS), and 530 to 623 (APEL…TPEG). 5 cysteine pairs are disulfide-bonded: Cys131-Cys142, Cys167-Cys218, Cys177-Cys186, Cys248-Cys295, and Cys266-Cys309. The short motif at 318-322 (WSDWS) is the WSXWS motif element. Residues Asn389, Asn474, Asn579, and Asn610 are each glycosylated (N-linked (GlcNAc...) asparagine). Residues 628–650 (IILGLFGLLLLLTCLCGTAWLCC) traverse the membrane as a helical segment. Topologically, residues 651 to 836 (SPNRKNPLWP…VHGMEALGSF (186 aa)) are cytoplasmic. The short motif at 658–666 (LWPSVPDPA) is the Box 1 motif element.

It belongs to the type I cytokine receptor family. Type 2 subfamily. In terms of assembly, homodimer. The dimeric receptor binds two CSF3 molecules. Interacts with CEACAM1; down-regulates the CSF3R-STAT3 pathway through recruitment of PTPN6 that dephosphorylates CSF3R. In terms of processing, N-glycosylated. One or several isoforms have been found in myelogenous leukemia cell line KG-1, leukemia U-937 cell line, in bone marrow cells, placenta, and peripheral blood granulocytes. Isoform GCSFR-2 is found only in leukemia U-937 cells. Isoform GCSFR-3 is highly expressed in placenta.

Its subcellular location is the secreted. The protein resides in the cell membrane. Functionally, receptor for granulocyte colony-stimulating factor (CSF3), essential for granulocytic maturation. Plays a crucial role in the proliferation, differentiation and survival of cells along the neutrophilic lineage. In addition it may function in some adhesion or recognition events at the cell surface. This chain is Granulocyte colony-stimulating factor receptor (CSF3R), found in Homo sapiens (Human).